A 581-amino-acid chain; its full sequence is uncharacterized protein (581 aa).

The N-terminal stretch at 1–28 is a signal peptide; the sequence is MDSKAVSPLIGFVLMLAIIMGLIGIMQA.

This is an uncharacterized protein from Archaeoglobus fulgidus (strain ATCC 49558 / DSM 4304 / JCM 9628 / NBRC 100126 / VC-16).